The following is a 108-amino-acid chain: Phosphoribosyl-AMP cyclohydrolase (108 aa).

Residue Asp-78 coordinates Mg(2+). Position 79 (Cys-79) interacts with Zn(2+). Positions 80 and 82 each coordinate Mg(2+). The Zn(2+) site is built by Cys-95 and Cys-102.

The protein belongs to the PRA-CH family. As to quaternary structure, homodimer. It depends on Mg(2+) as a cofactor. Zn(2+) serves as cofactor.

The protein resides in the cytoplasm. It catalyses the reaction 1-(5-phospho-beta-D-ribosyl)-5'-AMP + H2O = 1-(5-phospho-beta-D-ribosyl)-5-[(5-phospho-beta-D-ribosylamino)methylideneamino]imidazole-4-carboxamide. It participates in amino-acid biosynthesis; L-histidine biosynthesis; L-histidine from 5-phospho-alpha-D-ribose 1-diphosphate: step 3/9. Catalyzes the hydrolysis of the adenine ring of phosphoribosyl-AMP. This Nitrosopumilus maritimus (strain SCM1) protein is Phosphoribosyl-AMP cyclohydrolase.